Here is a 776-residue protein sequence, read N- to C-terminus: Homoaconitase, mitochondrial (776 aa).

The transit peptide at 1–38 (MQSRLVSQSGLGRRWAVLRCALSKTYQRRTLTSTRRQF) directs the protein to the mitochondrion. 3 residues coordinate [4Fe-4S] cluster: C394, C463, and C466.

This sequence belongs to the aconitase/IPM isomerase family. The cofactor is [4Fe-4S] cluster.

The protein resides in the mitochondrion. The enzyme catalyses (2R,3S)-homoisocitrate = cis-homoaconitate + H2O. The protein operates within amino-acid biosynthesis; L-lysine biosynthesis via AAA pathway; L-alpha-aminoadipate from 2-oxoglutarate: step 3/5. Catalyzes the reversible hydration of cis-homoaconitate to (2R,3S)-homoisocitrate, a step in the alpha-aminoadipate pathway for lysine biosynthesis. The protein is Homoaconitase, mitochondrial (lys4) of Emericella nidulans (strain FGSC A4 / ATCC 38163 / CBS 112.46 / NRRL 194 / M139) (Aspergillus nidulans).